The following is a 462-amino-acid chain: L-seryl-tRNA(Sec) selenium transferase (462 aa).

The residue at position 294 (K294) is an N6-(pyridoxal phosphate)lysine.

Belongs to the SelA family. In terms of assembly, homodecamer; pentamer of dimers. Binds only one seryl-tRNA(Sec) per dimer. It depends on pyridoxal 5'-phosphate as a cofactor.

It is found in the cytoplasm. The catalysed reaction is L-seryl-tRNA(Sec) + selenophosphate + H(+) = L-selenocysteinyl-tRNA(Sec) + phosphate. It participates in aminoacyl-tRNA biosynthesis; selenocysteinyl-tRNA(Sec) biosynthesis; selenocysteinyl-tRNA(Sec) from L-seryl-tRNA(Sec) (bacterial route): step 1/1. Its function is as follows. Converts seryl-tRNA(Sec) to selenocysteinyl-tRNA(Sec) required for selenoprotein biosynthesis. This is L-seryl-tRNA(Sec) selenium transferase from Yersinia pseudotuberculosis serotype O:1b (strain IP 31758).